The sequence spans 121 residues: ATP synthase epsilon chain (121 aa).

The protein belongs to the ATPase epsilon chain family. As to quaternary structure, F-type ATPases have 2 components, CF(1) - the catalytic core - and CF(0) - the membrane proton channel. CF(1) has five subunits: alpha(3), beta(3), gamma(1), delta(1), epsilon(1). CF(0) has three main subunits: a, b and c.

It localises to the cell membrane. In terms of biological role, produces ATP from ADP in the presence of a proton gradient across the membrane. This chain is ATP synthase epsilon chain, found in Mycobacterium marinum (strain ATCC BAA-535 / M).